The sequence spans 234 residues: Dienlactone hydrolase 2 (234 aa).

Catalysis depends on residues Cys-143, Asp-167, and His-199.

The protein belongs to the dienelactone hydrolase family.

It functions in the pathway xenobiotic degradation. Dienlactone hydrolase; part of the Fusarium detoxification of benzoxazolinone cluster 2 (FDB2) involved in the degradation of benzoxazolinones produced by the host plant. Maize, wheat, and rye produce the 2 benzoxazinone phytoanticipins 2,4-dihy-droxy-7-methoxy-1,4-benzoxazin-3-one (DIMBOA) and 2,4-dihydroxy-1,4-benzoxazin-3-one (DIBOA) that, due to their inherent instability once released, spontaneously degrade to the more stable corresponding benzoxazolinones, 6-methoxy-2-benzoxazolinone (MBOA) and 2-benzoxazolinone (BOA), respectively. The first step in the detoxification of benzoxazolinones involves the hydrolysis of the cyclic ester bond of benzoxazolinones by the FDB1 cluster gamma-lactamase MBL1 to aminophenols. MBL1 is able to convert BOA into 2-aminophenol (2-AP), as well as MBOA into 5-methoxy-2-aminophenol (2-AMP). The FDB2 cluster N-malonyltransferase FDB2/NAT1 then metabolizes aminophenols via N-malonylation to non-toxic malonamic acids. FDB2/NAT1 converts 2-AP into N-(2-hydroxyphenyl) malonamic acid (HPMA) and 2-AMP into N-(2-hydroxy-4-methoxyphenyl) malonamic acid (HMPMA). The duplicated dienlactone hydrolases DLH1 and DLH2 may provide redundant function for hydrolyzing the lactone moiety in the BOA molecule. The roles of the amidases and other enzymes encoded by the 2 FDB clusters have not been identified so far. The sequence is that of Dienlactone hydrolase 2 from Gibberella moniliformis (strain M3125 / FGSC 7600) (Maize ear and stalk rot fungus).